The following is a 253-amino-acid chain: Low affinity immunoglobulin gamma Fc region receptor III-A (253 aa).

An N-terminal signal peptide occupies residues 1 to 20; the sequence is MGQPLPPVALLLLVSASSRA. The Extracellular segment spans residues 21–207; that stretch reads ADVPKALVLL…ISSSVLPWHQ (187 aa). 2 Ig-like C2-type domains span residues 24–90 and 99–189; these read PKAL…YRCQ and PVQL…VTIT. 2 cysteine pairs are disulfide-bonded: cysteine 47–cysteine 89 and cysteine 128–cysteine 172. 4 N-linked (GlcNAc...) asparagine glycosylation sites follow: asparagine 56, asparagine 63, asparagine 165, and asparagine 180. Residues 208–226 form a helical membrane-spanning segment; the sequence is IAFCLVMGLLLAADTGLYF. The Cytoplasmic portion of the chain corresponds to 227–253; sequence SVQRDLRSSQRARKEHTLGWSLGSQDK.

As to quaternary structure, forms a heterooligomeric complex with ITAM-containing signaling subunits FCER1G. Interacts (via transmembrane domain) with signaling subunits; this interaction is a prerequisite for receptor complex expression on the cell surface and intracellular signal transduction. Binds the Fc region of antigen-complexed IgG.

Its subcellular location is the cell membrane. Functionally, receptor for the invariable Fc fragment of immunoglobulin gamma (IgG). Optimally activated upon binding of clustered antigen-IgG complexes displayed on cell surfaces, triggers lysis of antibody-coated cells, a process known as antibody-dependent cellular cytotoxicity (ADCC). Does not bind free monomeric IgG, thus avoiding inappropriate effector cell activation in the absence of antigenic trigger. Mediates IgG effector functions on natural killer (NK) cells. Binds antigen-IgG complexes generated upon infection and triggers NK cell-dependent cytokine production and degranulation to limit viral load and propagation. Fc-binding subunit that associates with FCER1G adapter to form functional signaling complexes. Following the engagement of antigen-IgG complexes, triggers phosphorylation of immunoreceptor tyrosine-based activation motif (ITAM)-containing adapters with subsequent activation of phosphatidylinositol 3-kinase signaling and sustained elevation of intracellular calcium that ultimately drive NK cell activation. Mediates enhanced ADCC in response to afucosylated IgGs. In Oryctolagus cuniculus (Rabbit), this protein is Low affinity immunoglobulin gamma Fc region receptor III-A.